Reading from the N-terminus, the 372-residue chain is DNA replication and repair protein RecF (372 aa).

30-37 (GENAQGKT) is a binding site for ATP.

This sequence belongs to the RecF family.

It localises to the cytoplasm. Its function is as follows. The RecF protein is involved in DNA metabolism; it is required for DNA replication and normal SOS inducibility. RecF binds preferentially to single-stranded, linear DNA. It also seems to bind ATP. The chain is DNA replication and repair protein RecF from Exiguobacterium sp. (strain ATCC BAA-1283 / AT1b).